Consider the following 380-residue polypeptide: ATPase ASNA1 homolog (380 aa).

Residue Lys-48–Thr-55 participates in ATP binding. Asp-77 is a catalytic residue. Residues Glu-248 and Asn-275 each contribute to the ATP site.

Belongs to the arsA ATPase family. As to quaternary structure, homodimer.

The protein resides in the cytoplasm. The protein localises to the endoplasmic reticulum. Its function is as follows. ATPase required for the post-translational delivery of tail-anchored (TA) proteins to the endoplasmic reticulum. Recognizes and selectively binds the transmembrane domain of TA proteins in the cytosol. This complex then targets to the endoplasmic reticulum by membrane-bound receptors, where the tail-anchored protein is released for insertion. This process is regulated by ATP binding and hydrolysis. ATP binding drives the homodimer towards the closed dimer state, facilitating recognition of newly synthesized TA membrane proteins. ATP hydrolysis is required for insertion. Subsequently, the homodimer reverts towards the open dimer state, lowering its affinity for the membrane-bound receptor, and returning it to the cytosol to initiate a new round of targeting. This chain is ATPase ASNA1 homolog, found in Plasmodium yoelii yoelii.